The following is a 72-amino-acid chain: uncharacterized protein (72 aa).

The next 2 helical transmembrane spans lie at 15–35 (WEILVYILVVGFGFALFIGSI) and 50–70 (ILIYVSCKFVFLIWISLMYFI).

It localises to the host membrane. This is an uncharacterized protein from Spiroplasma melliferum (SpV1).